We begin with the raw amino-acid sequence, 485 residues long: Glutamyl-tRNA(Gln) amidotransferase subunit A (485 aa).

Catalysis depends on charge relay system residues lysine 78 and serine 153. The Acyl-ester intermediate role is filled by serine 177.

The protein belongs to the amidase family. GatA subfamily. Heterotrimer of A, B and C subunits.

It carries out the reaction L-glutamyl-tRNA(Gln) + L-glutamine + ATP + H2O = L-glutaminyl-tRNA(Gln) + L-glutamate + ADP + phosphate + H(+). Allows the formation of correctly charged Gln-tRNA(Gln) through the transamidation of misacylated Glu-tRNA(Gln) in organisms which lack glutaminyl-tRNA synthetase. The reaction takes place in the presence of glutamine and ATP through an activated gamma-phospho-Glu-tRNA(Gln). The sequence is that of Glutamyl-tRNA(Gln) amidotransferase subunit A from Geobacter sulfurreducens (strain ATCC 51573 / DSM 12127 / PCA).